The following is a 207-amino-acid chain: Large ribosomal subunit protein uL3 (207 aa).

A disordered region spans residues 126 to 149; it reads GPASHGSKKWHRRPGSIGQRKTPG.

It belongs to the universal ribosomal protein uL3 family. In terms of assembly, part of the 50S ribosomal subunit. Forms a cluster with proteins L14 and L19.

Its function is as follows. One of the primary rRNA binding proteins, it binds directly near the 3'-end of the 23S rRNA, where it nucleates assembly of the 50S subunit. The chain is Large ribosomal subunit protein uL3 from Deinococcus geothermalis (strain DSM 11300 / CIP 105573 / AG-3a).